An 85-amino-acid chain; its full sequence is uncharacterized protein (85 aa).

This is an uncharacterized protein from Acidithiobacillus ferrooxidans (Thiobacillus ferrooxidans).